We begin with the raw amino-acid sequence, 264 residues long: Thiazole synthase (264 aa).

The active-site Schiff-base intermediate with DXP is the Lys106. 1-deoxy-D-xylulose 5-phosphate contacts are provided by residues Gly167, 193–194 (AG), and 215–216 (NS).

It belongs to the ThiG family. Homotetramer. Forms heterodimers with either ThiH or ThiS.

The protein localises to the cytoplasm. It catalyses the reaction [ThiS sulfur-carrier protein]-C-terminal-Gly-aminoethanethioate + 2-iminoacetate + 1-deoxy-D-xylulose 5-phosphate = [ThiS sulfur-carrier protein]-C-terminal Gly-Gly + 2-[(2R,5Z)-2-carboxy-4-methylthiazol-5(2H)-ylidene]ethyl phosphate + 2 H2O + H(+). It functions in the pathway cofactor biosynthesis; thiamine diphosphate biosynthesis. In terms of biological role, catalyzes the rearrangement of 1-deoxy-D-xylulose 5-phosphate (DXP) to produce the thiazole phosphate moiety of thiamine. Sulfur is provided by the thiocarboxylate moiety of the carrier protein ThiS. In vitro, sulfur can be provided by H(2)S. In Prochlorococcus marinus (strain AS9601), this protein is Thiazole synthase.